Consider the following 401-residue polypeptide: MLEKHRVLDSAPEYVDKKKYLWILSTLWPATPMIGIWLANETGWGIFYGLVLLVWYGALPLLDAMFGEDFNNPPEEVVPKLEKERYYRVLTYLTVPMHYAALIVSAWWVGTQPMSWLEIGALALSLGIVNGLALNTGHELGHKKETFDRWMAKIVLAVVGYGHFFIEHNKGHHRDVATPMDPATSRMGESIYKFSIREIPGAFIRAWGLEEQRLSRRGQSVWSFDNEILQPMIITVILYAVLLALFGPKMLVFLPIQMAFGWWQLTSANYIEHYGLLRQKMEDGRYEHQKPHHSWNSNHIVSNLVLFHLQRHSDHHAHPTRSYQSLRDFPGLPALPTGYPGAFLMAMIPQWFRSVMDPKVVDWAGGDLNKIQIDDSMRETYLKKFGTSSAGHSSSTSAVAS.

At 1–20 the chain is on the cytoplasmic side; it reads MLEKHRVLDSAPEYVDKKKY. A helical transmembrane segment spans residues 21 to 39; that stretch reads LWILSTLWPATPMIGIWLA. Residues 40–41 are Periplasmic-facing; it reads NE. A helical transmembrane segment spans residues 42 to 62; that stretch reads TGWGIFYGLVLLVWYGALPLL. The Cytoplasmic portion of the chain corresponds to 63 to 88; the sequence is DAMFGEDFNNPPEEVVPKLEKERYYR. The chain crosses the membrane as a helical span at residues 89–111; that stretch reads VLTYLTVPMHYAALIVSAWWVGT. The Periplasmic segment spans residues 112-113; sequence QP. The chain crosses the membrane as a helical span at residues 114 to 134; that stretch reads MSWLEIGALALSLGIVNGLAL. Residues 135–228 lie on the Cytoplasmic side of the membrane; sequence NTGHELGHKK…QSVWSFDNEI (94 aa). Fe cation-binding residues include His-138, His-142, His-168, His-172, and His-173. Residues 229–249 form a helical membrane-spanning segment; sequence LQPMIITVILYAVLLALFGPK. Met-250 is a topological domain (periplasmic). Residues 251–270 traverse the membrane as a helical segment; the sequence is LVFLPIQMAFGWWQLTSANY. Residues 271-401 are Cytoplasmic-facing; the sequence is IEHYGLLRQK…HSSSTSAVAS (131 aa). His-312, His-315, and His-316 together coordinate Fe cation.

Belongs to the fatty acid desaturase type 1 family. AlkB subfamily. Fe(3+) serves as cofactor.

It is found in the cell inner membrane. It catalyses the reaction octane + 2 reduced [rubredoxin] + O2 + 2 H(+) = 2 oxidized [rubredoxin] + octan-1-ol + H2O. It functions in the pathway hydrocarbon metabolism; alkane degradation. Functionally, catalyzes the hydroxylation of n-alkanes and fatty acids in the presence of a NADH-rubredoxin reductase and rubredoxin. In Ectopseudomonas oleovorans (Pseudomonas oleovorans), this protein is Alkane 1-monooxygenase (alkB).